A 74-amino-acid chain; its full sequence is Protein SlyX homolog (74 aa).

Residues 52–74 (LKQMQENQSTDSDPADEPPPPHY) are disordered.

Belongs to the SlyX family.

In Idiomarina loihiensis (strain ATCC BAA-735 / DSM 15497 / L2-TR), this protein is Protein SlyX homolog.